Consider the following 142-residue polypeptide: FAD synthase (142 aa).

Residues Thr-9 to Phe-10, His-14 to His-17, and Asp-92 each bind ATP.

It belongs to the archaeal FAD synthase family. As to quaternary structure, homodimer. A divalent metal cation is required as a cofactor.

The catalysed reaction is FMN + ATP + H(+) = FAD + diphosphate. The protein operates within cofactor biosynthesis; FAD biosynthesis; FAD from FMN: step 1/1. Catalyzes the transfer of the AMP portion of ATP to flavin mononucleotide (FMN) to produce flavin adenine dinucleotide (FAD) coenzyme. This is FAD synthase from Halalkalicoccus jeotgali (strain DSM 18796 / CECT 7217 / JCM 14584 / KCTC 4019 / B3).